The sequence spans 273 residues: Dermonecrotic toxin LdSicTox-alphaIB3avi (273 aa).

Histidine 5 is an active-site residue. Residues glutamate 25 and aspartate 27 each contribute to the Mg(2+) site. Histidine 41 (nucleophile) is an active-site residue. 2 disulfide bridges follow: cysteine 45–cysteine 51 and cysteine 47–cysteine 190. Aspartate 85 contacts Mg(2+).

The protein belongs to the arthropod phospholipase D family. Class II subfamily. Requires Mg(2+) as cofactor. In terms of tissue distribution, expressed by the venom gland.

Its subcellular location is the secreted. It catalyses the reaction an N-(acyl)-sphingosylphosphocholine = an N-(acyl)-sphingosyl-1,3-cyclic phosphate + choline. The enzyme catalyses an N-(acyl)-sphingosylphosphoethanolamine = an N-(acyl)-sphingosyl-1,3-cyclic phosphate + ethanolamine. It carries out the reaction a 1-acyl-sn-glycero-3-phosphocholine = a 1-acyl-sn-glycero-2,3-cyclic phosphate + choline. The catalysed reaction is a 1-acyl-sn-glycero-3-phosphoethanolamine = a 1-acyl-sn-glycero-2,3-cyclic phosphate + ethanolamine. In terms of biological role, dermonecrotic toxins cleave the phosphodiester linkage between the phosphate and headgroup of certain phospholipids (sphingolipid and lysolipid substrates), forming an alcohol (often choline) and a cyclic phosphate. This toxin acts on sphingomyelin (SM). It may also act on ceramide phosphoethanolamine (CPE), lysophosphatidylcholine (LPC) and lysophosphatidylethanolamine (LPE), but not on lysophosphatidylserine (LPS), and lysophosphatidylglycerol (LPG). It acts by transphosphatidylation, releasing exclusively cyclic phosphate products as second products. Induces dermonecrosis, hemolysis, increased vascular permeability, edema, inflammatory response, and platelet aggregation. The sequence is that of Dermonecrotic toxin LdSicTox-alphaIB3avi from Loxosceles deserta (Desert recluse spider).